A 772-amino-acid chain; its full sequence is Putative ribosomal protein S6 kinase alpha-2 (772 aa).

Positions 17-284 (FALLRVLGKG…VDEIKNHKFM (268 aa)) constitute a Protein kinase 1 domain. Residues 23–31 (LGKGAYGKV) and Lys-49 each bind ATP. The Proton acceptor role is filled by Asp-145. Phosphoserine; by autocatalysis is present on residues Ser-180, Ser-342, and Ser-347. One can recognise an AGC-kinase C-terminal domain in the interval 285-353 (SSIDWDAAVK…VSPSVIFAND (69 aa)). In terms of domain architecture, Protein kinase 2 spans 382 to 653 (KSDAGLLGKG…MQELTAHMWL (272 aa)). Residues 388 to 396 (LGKGAFSVV) and Lys-411 each bind ATP. The active-site Proton acceptor is the Asp-500. The interval 706 to 772 (RGIKRQSGDK…IRETRGSDSS (67 aa)) is disordered. The residue at position 712 (Ser-712) is a Phosphoserine; by autocatalysis. Composition is skewed to polar residues over residues 718-727 (SGNSKNSRVT) and 739-748 (EMTSSTSRPS).

The protein belongs to the protein kinase superfamily. AGC Ser/Thr protein kinase family. S6 kinase subfamily. Mg(2+) serves as cofactor.

The catalysed reaction is L-seryl-[protein] + ATP = O-phospho-L-seryl-[protein] + ADP + H(+). The enzyme catalyses L-threonyl-[protein] + ATP = O-phospho-L-threonyl-[protein] + ADP + H(+). Activated by multiple phosphorylations on threonine and serine residues. Functionally, serine/threonine kinase that may play a role in mediating the mitogen- and stress-induced effects on transcription. May repress transcription via phosphorylation of 'Ser-1' of histone H2A. May phosphorylate histone H3. The chain is Putative ribosomal protein S6 kinase alpha-2 (rskn-2) from Caenorhabditis elegans.